A 438-amino-acid polypeptide reads, in one-letter code: GTPase Der (438 aa).

EngA-type G domains are found at residues 4–168 (PVVA…DDNS) and 177–352 (TKVC…NNYS). GTP is bound by residues 10–17 (GRANVGKS), 57–61 (DTGGL), 120–123 (NKID), 183–190 (GKPNVGKS), 230–234 (DTAGL), and 295–298 (NKWD). A KH-like domain is found at 353–437 (MRISTGVLND…PLQFEFKTRG (85 aa)).

The protein belongs to the TRAFAC class TrmE-Era-EngA-EngB-Septin-like GTPase superfamily. EngA (Der) GTPase family. As to quaternary structure, associates with the 50S ribosomal subunit.

Its function is as follows. GTPase that plays an essential role in the late steps of ribosome biogenesis. This is GTPase Der from Finegoldia magna (strain ATCC 29328 / DSM 20472 / WAL 2508) (Peptostreptococcus magnus).